Here is a 243-residue protein sequence, read N- to C-terminus: Small ribosomal subunit protein uS2 (243 aa).

It belongs to the universal ribosomal protein uS2 family.

This chain is Small ribosomal subunit protein uS2, found in Pseudoalteromonas atlantica (strain T6c / ATCC BAA-1087).